The primary structure comprises 897 residues: Echinoderm microtubule-associated protein-like 3 (897 aa).

N-acetylmethionine is present on Met-1. Positions Leu-16–Leu-43 form a coiled coil. Polar residues predominate over residues Thr-51–Thr-68. Residues Thr-51–Tyr-210 form a disordered region. Composition is skewed to low complexity over residues Pro-96–Pro-108, Ser-118–Ala-132, and Arg-155–Ser-164. Over residues Ala-175–Ser-190 the composition is skewed to polar residues. Residues Ser-177, Ser-199, and Ser-205 each carry the phosphoserine modification. 13 WD repeats span residues Arg-235 to Pro-287, Gly-296 to Ser-345, Leu-351 to Cys-393, Leu-399 to Trp-435, Arg-449 to Arg-488, Tyr-505 to Pro-544, Gln-550 to Asp-585, Phe-590 to Gly-627, His-630 to Thr-668, Ser-675 to Val-710, Ser-717 to Val-756, Arg-766 to Tyr-824, and Ala-831 to Val-870. The disordered stretch occupies residues Ser-876 to Val-897. Phosphothreonine; by CDK1 is present on Thr-882. A compositionally biased stretch (polar residues) spans Pro-883 to Val-897. Phosphoserine is present on Ser-884.

Belongs to the WD repeat EMAP family. Homotrimer; self-association is mediated by the N-terminal coiled coil. Interacts with EML2 but not with EML1. Interacts (phosphorylated at Thr-882) with TUBG1, HAUS1, HAUS2, HAUS3, HAUS4, HAUS5, HAUS6, HAUS7 and HAUS8. Post-translationally, phosphorylation at Thr-882 during mitosis is required for interaction with TUBG1, HAUS1, HAUS2, HAUS3, HAUS4, HAUS5, HAUS6, HAUS7 and HAUS8 and their recruitment to spindle microtubules.

The protein resides in the cytoplasm. It is found in the cytoskeleton. Its subcellular location is the nucleus. The protein localises to the midbody. It localises to the spindle. Functionally, regulates mitotic spindle assembly, microtubule (MT)-kinetochore attachment and chromosome separation via recruitment of HAUS augmin-like complex and TUBG1 to the existing MTs and promoting MT-based MT nucleation. Required for proper alignnment of chromosomes during metaphase. This chain is Echinoderm microtubule-associated protein-like 3 (Eml3), found in Mus musculus (Mouse).